A 635-amino-acid polypeptide reads, in one-letter code: Extracellular metalloproteinase MEP (635 aa).

Residues Met-1 to Ala-19 form the signal peptide. Positions His-20–Glu-244 are excised as a propeptide. N-linked (GlcNAc...) asparagine glycosylation is found at Asn-287, Asn-302, and Asn-336. His-429 is a binding site for Zn(2+). Glu-430 is a catalytic residue. His-433 contacts Zn(2+).

The protein belongs to the peptidase M36 family. It depends on Zn(2+) as a cofactor.

The protein resides in the secreted. Functionally, secreted metalloproteinase that allows assimilation of proteinaceous substrates. The protein is Extracellular metalloproteinase MEP (MEP) of Leptosphaeria maculans (strain JN3 / isolate v23.1.3 / race Av1-4-5-6-7-8) (Blackleg fungus).